We begin with the raw amino-acid sequence, 173 residues long: METLHHPLVKMEEDYALSSDSEPNSTCMANTWDWKSHNESYSLSQTPSPQSVSPAASYESTYSSSPHTGQGLEEMPFSYSLLQYPTLCHGDNGALTKKDHGHKTSMTTHRRRKASEREKLRMRAIAEALHTLRNNLPPMYSQGRQPLTKIQTLKCTINYISELTNLLQCSKRA.

Residues 39-68 show a composition bias toward polar residues; the sequence is ESYSLSQTPSPQSVSPAASYESTYSSSPHT. Disordered stretches follow at residues 39-69 and 96-117; these read ESYSLSQTPSPQSVSPAASYESTYSSSPHTG and TKKDHGHKTSMTTHRRRKASER. Residues 99 to 114 show a composition bias toward basic residues; that stretch reads DHGHKTSMTTHRRRKA. One can recognise a bHLH domain in the interval 109 to 163; sequence HRRRKASEREKLRMRAIAEALHTLRNNLPPMYSQGRQPLTKIQTLKCTINYISEL.

It is found in the nucleus. In terms of biological role, involved in specifying the paraxial, but not dorsal, mesoderm. May regulate the expression of T-box transcription factors required for mesoderm formation and differentiation, such as brachyury T, wnt8, vegt and eomes. The chain is Mesogenin-1 (msgn1) from Xenopus laevis (African clawed frog).